Here is a 156-residue protein sequence, read N- to C-terminus: Lipoprotein signal peptidase (156 aa).

A run of 3 helical transmembrane segments spans residues 5–25, 64–84, and 89–109; these read FKFIFYFWGAFVLVFALDQWV, YLHLALIGVLFIYLFWQKTLL, and IAFGMMLGAGVSNLLDRFIYG. Active-site residues include Asp113 and Asp130. A helical membrane pass occupies residues 122–142; it reads NFAIFNVADVMINISVALILI.

Belongs to the peptidase A8 family.

Its subcellular location is the cell inner membrane. The catalysed reaction is Release of signal peptides from bacterial membrane prolipoproteins. Hydrolyzes -Xaa-Yaa-Zaa-|-(S,diacylglyceryl)Cys-, in which Xaa is hydrophobic (preferably Leu), and Yaa (Ala or Ser) and Zaa (Gly or Ala) have small, neutral side chains.. Its pathway is protein modification; lipoprotein biosynthesis (signal peptide cleavage). This protein specifically catalyzes the removal of signal peptides from prolipoproteins. The chain is Lipoprotein signal peptidase from Campylobacter jejuni subsp. doylei (strain ATCC BAA-1458 / RM4099 / 269.97).